Reading from the N-terminus, the 102-residue chain is Small ribosomal subunit protein uS10 (102 aa).

It belongs to the universal ribosomal protein uS10 family. In terms of assembly, part of the 30S ribosomal subunit.

In terms of biological role, involved in the binding of tRNA to the ribosomes. The polypeptide is Small ribosomal subunit protein uS10 (Dehalococcoides mccartyi (strain ATCC BAA-2100 / JCM 16839 / KCTC 5957 / BAV1)).